The following is a 283-amino-acid chain: MARRPGAPAAYGEDFSFVSPLVKYLLFFFNMLFWVISMVMVAVGVYARLMKHEEAALACLAVDPAILLIVVGILMFLLTFCGCIGSLRENICLLQTFSLCLTVVFLLQLAAGVLGFVFSDKVRGKVSEIINNAIVHYRDDLDLQNLIDFGQKEFSCCGGISYKDWSLNMYFNCSEDNPSRERCSVPYSCCLPTPNQAVINTMCGQGMQALDYLEASKVIYTNGCIDRLVNWIHSNLFVLGGVALGLAIPQLVGIMLSMILVSQIKDQIKLQLYNQQHRADPWY.

Residues M1–Y24 lie on the Cytoplasmic side of the membrane. A helical membrane pass occupies residues L25–V45. Over Y46 to P64 the chain is Extracellular. Residues A65 to G85 traverse the membrane as a helical segment. Over S86–T96 the chain is Cytoplasmic. A helical membrane pass occupies residues F97–V117. The Extracellular segment spans residues F118–N235. 4 disulfides stabilise this stretch: C156-C224, C157-C189, C173-C183, and C190-C203. An N-linked (GlcNAc...) asparagine glycan is attached at N172. A helical membrane pass occupies residues L236–L256. Residues S257–Y283 are Cytoplasmic-facing.

This sequence belongs to the tetraspanin (TM4SF) family. Homodimer; disulfide-linked. Interacts (via extracellular domain) with ADAM10 (via extracellular domain). Interacts (via cytoplasmic domain) with PLEKHA7 (via WW domains); the interaction is dependent on PDZD11 being bound to PLEKHA7 and facilitates the docking of ADAM10 to zonula adherens.

It localises to the cell membrane. Its subcellular location is the cell junction. The protein resides in the adherens junction. It is found in the cytoplasm. In terms of biological role, part of TspanC8 subgroup, composed of 6 members that interact with the transmembrane metalloprotease ADAM10. This interaction is required for ADAM10 exit from the endoplasmic reticulum and for enzymatic maturation and trafficking to the cell surface as well as substrate specificity. Different TspanC8/ADAM10 complexes have distinct substrates. Plays an important role in normal erythropoiesis. It has a role in the differentiation of erythroid progenitors. Negatively regulates ligand-induced Notch activity probably by regulating ADAM10 activity. Mediates docking of ADAM10 to zonula adherens by interacting with ADAM10 and, in a PDZD11-dependent manner, with the zonula adherens protein PLEKHA7. The polypeptide is Tetraspanin-33 (TSPAN33) (Bos taurus (Bovine)).